The primary structure comprises 415 residues: D-galactonate dehydratase family member RspA (415 aa).

Residues N48 and H133 each coordinate substrate. The active-site Proton donor/acceptor is the Y170. D223 contacts Mg(2+). H225 functions as the Proton donor/acceptor in the catalytic mechanism. Residues E249 and E275 each contribute to the Mg(2+) site. The substrate site is built by E275, R296, H325, D329, and E352.

This sequence belongs to the mandelate racemase/muconate lactonizing enzyme family. GalD subfamily. Mg(2+) is required as a cofactor.

The catalysed reaction is D-mannonate = 2-dehydro-3-deoxy-D-gluconate + H2O. Functionally, has low D-mannonate dehydratase activity (in vitro), suggesting that this is not a physiological substrate and that it has no significant role in D-mannonate degradation in vivo. Has no detectable activity with a panel of 70 other acid sugars (in vitro). The protein is D-galactonate dehydratase family member RspA (rspA) of Escherichia coli (strain MS 21-1).